We begin with the raw amino-acid sequence, 247 residues long: Small ribosomal subunit protein uS2 (247 aa).

Belongs to the universal ribosomal protein uS2 family.

The polypeptide is Small ribosomal subunit protein uS2 (Ralstonia pickettii (strain 12J)).